Reading from the N-terminus, the 69-residue chain is Double-strand break reduction protein (69 aa).

Helps to maintain the integrity of the chromosome by lowering the steady-state level of double strand breaks. This region of DNA acts as an antitoxin to toxin RalR, a DNase, but it seems to be sRNA RalA that has the antitoxin activity and not this putative protein. Therefore the identity of this as a protein-coding gene has been cast into doubt. The sequence is that of Double-strand break reduction protein from Escherichia coli (strain K12).